The primary structure comprises 3603 residues: Plipastatin synthase subunit D (3603 aa).

Positions 7–306 (IQDIYPLSYM…NTMPVRVQGA (300 aa)) are condensation 1. Positions 7 to 1043 (IQDIYPLSYM…ALIIREAEQN (1037 aa)) are domain 1 (proline-activating). The adenylation 1 stretch occupies residues 490–889 (TYRELNKAAN…NHPDISEAAI (400 aa)). In terms of domain architecture, Carrier 1 spans 966-1041 (APRNLLEAKL…GLALIIREAE (76 aa)). Position 1001 is an O-(pantetheine 4'-phosphoryl)serine (Ser-1001). Residues 1053–1334 (KRDTYPVSSA…NTLALRTRPA (282 aa)) are condensation 2. The interval 1053 to 2069 (KRDTYPVSSA…TVEGLATVIR (1017 aa)) is domain 2 (glutamine-activating). The segment at 1521–1924 (TYKELNEQAN…SIEGVREAAV (404 aa)) is adenylation 2. Residues 1997 to 2072 (APRNVTEMKL…GLATVIREGT (76 aa)) form the Carrier 2 domain. At Ser-2032 the chain carries O-(pantetheine 4'-phosphoryl)serine. Residues 2084–2374 (KQETYPVSSA…NTLALRTRPE (291 aa)) form a condensation 3 region. Positions 2084-3596 (KQETYPVSSA…ELTEDALQEI (1513 aa)) are domain 3 (proline-activating). The segment at 2560-2956 (TYQELDEWSN…CIKGVKDAAV (397 aa)) is adenylation 3. A Carrier 3 domain is found at 3034–3108 (PPSSKMEQIL…ELAAYIRDSD (75 aa)). Ser-3069 carries the post-translational modification O-(pantetheine 4'-phosphoryl)serine. Residues 3116-3596 (VEGDVQWSPV…ELTEDALQEI (481 aa)) are epimerization.

The protein belongs to the ATP-dependent AMP-binding enzyme family. Pantetheine 4'-phosphate serves as cofactor.

Functionally, this protein is a multifunctional enzyme, able to activate and polymerize the amino acids Pro, Gln and Tyr as part of the biosynthesis of the lipopeptide antibiotic plipastatin. The Tyr residue is further epimerized to the D-isomer form. The activation sites for these amino acids consist of individual domains. The chain is Plipastatin synthase subunit D (ppsD) from Bacillus subtilis (strain 168).